Here is a 68-residue protein sequence, read N- to C-terminus: KCNQ1 downstream neighbor protein (68 aa).

Residues 28-68 (GVASGCSPSKASQEARGKEKCPTLNGQPQWSALFTLPPQRE) form a disordered region.

Shows reduced expression in Wilms' tumor samples.

The chain is KCNQ1 downstream neighbor protein (KCNQ1DN) from Homo sapiens (Human).